We begin with the raw amino-acid sequence, 381 residues long: 2-oxoglutarate-dependent dioxygenase FGSG_00048 (381 aa).

This sequence belongs to the iron/ascorbate-dependent oxidoreductase family. Fe(2+) is required as a cofactor.

The protein operates within mycotoxin biosynthesis. In terms of biological role, 2-oxoglutarate-dependent dioxygenase; part of the gene cluster that mediates the biosynthesis of gramillins A and B, bicyclic lipopeptides that induce cell death in maize leaves but not in wheat leaves. The nonribosomal peptide synthetase GRA1 incorporates respectively a glutamic adic (Glu), a leucine (Leu), a serine (Ser), a hydroxyglutamine (HOGln), a 2-amino decanoic acid, and 2 cysteins (CysB and CysA). The biosynthesis of 2-amino decanoic acid incorporated in gramillins could be initiated by a fatty acid synthase composed of the alpha and beta subunits FGSG_00036 and FGSG_11656. The cytochrome P450 monooxygenase FGSG_15680 could hydroxylate the fatty acid chain. Subsequent oxidation to the ketone by the oxidoreductase FGSG_00048 and transamination by aminotransferase FGSG_00049 could form 2-amino-decanoic acid. On the other hand, FGSG_15680 could also be responsible for the HO-modified glutamine at the gamma-position. Whether hydroxylation occurs on the fully assembled product or on the Gln residue prior to assembly into the gramillins requires further proof. The thioredoxin FGSG_00043 could also be required for the disulfide-bond formation between CysA and CysB. The specific involvement of the remaining proteins from the cluster is more difficult to discern, but could have broader regulatory (FGSG_00040 and FGSG_11657) or enzymatic functions (FGSG_00044 and FGSG_00045). The final C-domain of GRA1 does not possess the expected sequence of a termination CT domain, often implicated in macrocyclization and release of a cyclopeptidein fungal NRPs; and the thioesterase FGSG_00047 may act in concert with the terminal C-domain of GRA1 to catalyze the formation of the macrocyclic anhydride and release of the products. In Gibberella zeae (strain ATCC MYA-4620 / CBS 123657 / FGSC 9075 / NRRL 31084 / PH-1) (Wheat head blight fungus), this protein is 2-oxoglutarate-dependent dioxygenase FGSG_00048.